The primary structure comprises 135 residues: Snaclec echicetin subunit alpha (135 aa).

A signal peptide spans 1–4 (GADE). Cystine bridges form between cysteine 6–cysteine 17, cysteine 34–cysteine 129, and cysteine 104–cysteine 121. The C-type lectin domain maps to 13-130 (NGVYCYMLFK…CENTFPFMCK (118 aa)).

The protein belongs to the snaclec family. In terms of assembly, heterodimer of subunits alpha and beta; disulfide-linked. In terms of tissue distribution, expressed by the venom gland.

The protein resides in the secreted. Binding of echicetin to GPIbalpha (GP1BA) receptor on platelets alone results in inhibition of platelet aggregation, while binding to both GP1BA receptor and IgMk promotes platelet aggregation and signal transduction. The polypeptide is Snaclec echicetin subunit alpha (Echis carinatus (Saw-scaled viper)).